The primary structure comprises 192 residues: Protein GrpE (192 aa).

Belongs to the GrpE family. As to quaternary structure, homodimer.

The protein resides in the cytoplasm. Its function is as follows. Participates actively in the response to hyperosmotic and heat shock by preventing the aggregation of stress-denatured proteins, in association with DnaK and GrpE. It is the nucleotide exchange factor for DnaK and may function as a thermosensor. Unfolded proteins bind initially to DnaJ; upon interaction with the DnaJ-bound protein, DnaK hydrolyzes its bound ATP, resulting in the formation of a stable complex. GrpE releases ADP from DnaK; ATP binding to DnaK triggers the release of the substrate protein, thus completing the reaction cycle. Several rounds of ATP-dependent interactions between DnaJ, DnaK and GrpE are required for fully efficient folding. In Neisseria gonorrhoeae (strain ATCC 700825 / FA 1090), this protein is Protein GrpE.